Consider the following 206-residue polypeptide: Small ribosomal subunit protein uS4 (206 aa).

The tract at residues 18–46 is disordered; that stretch reads NIWGRPKSPVNRREYGPGQHGQRRKGKIS. An S4 RNA-binding domain is found at 94–154; sequence RRLDAVVYRA…DRSKQMVALI (61 aa).

The protein belongs to the universal ribosomal protein uS4 family. In terms of assembly, part of the 30S ribosomal subunit. Contacts protein S5. The interaction surface between S4 and S5 is involved in control of translational fidelity.

In terms of biological role, one of the primary rRNA binding proteins, it binds directly to 16S rRNA where it nucleates assembly of the body of the 30S subunit. Functionally, with S5 and S12 plays an important role in translational accuracy. This is Small ribosomal subunit protein uS4 from Roseobacter denitrificans (strain ATCC 33942 / OCh 114) (Erythrobacter sp. (strain OCh 114)).